Here is a 621-residue protein sequence, read N- to C-terminus: Kelch-like protein 40 (621 aa).

One can recognise a BTB domain in the interval 33 to 98 (LDCVVRAGER…LYTSEIALDE (66 aa)). The BACK domain occupies 133–239 (CLAVFRLGLL…PRAFLESRVE (107 aa)). The disordered stretch occupies residues 265-295 (ITTLRKKKKGKDGAGAKEADKGTSKAKAEED). Residues 275–292 (KDGAGAKEADKGTSKAKA) are compositionally biased toward basic and acidic residues. Kelch repeat units follow at residues 360–412 (QVFV…EALN), 413–462 (SIYV…SHMD), 463–510 (LVYV…VHDG), 512–557 (IIVA…SLVG), and 559–613 (LYAI…PVRL).

Belongs to the KLHL40 family. Component of the BCR(KLHL40) E3 ubiquitin ligase complex, at least composed of CUL3, KLHL40 and RBX1. Interacts with LMOD3. In terms of tissue distribution, highly expressed in fetal (19, 23 and 31 weeks of gestation) and adult skeletal muscle; expression levels tend to be higher in fetal compared to postnatal muscles (at protein level). Also expressed in fetal and adult heart.

It localises to the cytoplasm. Its subcellular location is the myofibril. It is found in the sarcomere. The protein resides in the a band. The protein localises to the i band. Its function is as follows. Substrate-specific adapter of a BCR (BTB-CUL3-RBX1) E3 ubiquitin ligase complex that acts as a key regulator of skeletal muscle development. The BCR(KLHL40) complex acts by mediating ubiquitination and degradation of TFDP1, thereby regulating the activity of the E2F:DP transcription factor complex. Promotes stabilization of LMOD3 by acting as a negative regulator of LMOD3 ubiquitination; the molecular process by which it negatively regulates ubiquitination of LMOD3 is however unclear. This is Kelch-like protein 40 from Homo sapiens (Human).